The chain runs to 531 residues: High affinity cysteine transporter (531 aa).

Topologically, residues 1–54 (MSKVDVKIGADSISSSDEILVPSRLADVTLAFMEENDAAVPEITPEQEKKLKRK) are cytoplasmic. The chain crosses the membrane as a helical span at residues 55-75 (LFLTIFTFVSAINLLLYMDKA). Residues 76–97 (TLSYDSILGFFEDTGLTQNTYN) are Lumenal-facing. Residues 98 to 118 (TVNTLFYVGFAIGQFPGQYLA) traverse the membrane as a helical segment. Topologically, residues 119–120 (QK) are cytoplasmic. The chain crosses the membrane as a helical span at residues 121–141 (LPLGKFLGGLLATWTILIFLS). The Lumenal portion of the chain corresponds to 142–154 (CTAYNFSGVVALR). Residue N146 is glycosylated (N-linked (GlcNAc...) asparagine). A helical transmembrane segment spans residues 155-175 (FFLGLTESVVIPILITTMGMF). Residues 176–186 (FDASERAAAQP) are Cytoplasmic-facing. A helical transmembrane segment spans residues 187–207 (FFFAACMGSPIPTGFIAYGVL). Residues 208–218 (HITNPSISLWK) lie on the Lumenal side of the membrane. A helical transmembrane segment spans residues 219–239 (IFTIIIGGLTFIMTVVVILWF). Topologically, residues 240-285 (PNNPADVKFFSIQERVWIIRRVQASTGSSIEQKVFKKSQFREAMKD) are cytoplasmic. The helical transmembrane segment at 286-306 (YITWLFGLFFLLQQLANNLPY) threads the bilayer. Residues 307–324 (QQNLLFEGMGGVDALGST) are Lumenal-facing. Residues 325-345 (LVSVAGAGFAVVCAFIATLML) traverse the membrane as a helical segment. Over 346 to 352 (AKWKNIS) the chain is Cytoplasmic. The helical transmembrane segment at 353-373 (ALTAIFWTLPALVGSIAAAAL) threads the bilayer. The Lumenal portion of the chain corresponds to 374 to 378 (PWDNK). The helical transmembrane segment at 379 to 399 (IGILANICMAGQIFGIPFIIA) threads the bilayer. Residues 400-413 (LSWASSSASGYTKK) are Cytoplasmic-facing. Residues 414-436 (LTRSSVSLFAMGIANIISPQIWR) traverse the membrane as a helical segment. Topologically, residues 437–447 (EKDSPRFLPAW) are lumenal. The helical transmembrane segment at 448–468 (IVQIVLSFSLAPAILLLIHFI) threads the bilayer. Residues 469–498 (LKRRNNQRLKNYDENLQNYLDRIQLIESEN) adopt a coiled-coil conformation. Over 469 to 531 (LKRRNNQRLK…LENETFIYPL (63 aa)) the chain is Cytoplasmic. Phosphoserine is present on residues S500 and S501.

The protein belongs to the major facilitator superfamily. Allantoate permease family.

It is found in the cell membrane. Its subcellular location is the endoplasmic reticulum membrane. High affinity cysteine-specific transporter. Major contributor to cysteine transport when cysteine, at low concentrations, is provided as the sole sulfur source. In Saccharomyces cerevisiae (strain ATCC 204508 / S288c) (Baker's yeast), this protein is High affinity cysteine transporter (YCT1).